Here is a 711-residue protein sequence, read N- to C-terminus: Double-stranded RNA-specific editase 1 (711 aa).

The disordered stretch occupies residues 1–79 (MDIEDEENMS…RRKTPGPVLP (79 aa)). Residues 63 to 73 (SKYRLKKRRKT) show a composition bias toward basic residues. Residues 78-144 (LPKNALMQLN…AEKALRSFVQ (67 aa)) form the DRBM 1 domain. Interaction with substrate RNA regions lie at residues 83-88 (LMQLNE) and 104-105 (VH). Ser149 is modified (phosphoserine). The disordered stretch occupies residues 176–220 (LFNGFETPDKSEPPFYVGSNGDDSFSSSGDVSLSASPVPASLTQP). Positions 192-213 (VGSNGDDSFSSSGDVSLSASPV) are enriched in low complexity. Positions 231 to 298 (PSGKNPVMIL…AQSALATVFN (68 aa)) constitute a DRBM 2 domain. Interaction with substrate RNA regions lie at residues 237 to 242 (VMILNE) and His259. An A to I editase domain is found at 370–707 (SVSTGTKCIN…VEKPTEQDQF (338 aa)). Residue His394 participates in Zn(2+) binding. The active-site Proton donor is the Glu396. Residues Arg400 and Arg401 each contribute to the 1D-myo-inositol hexakisphosphate site. Positions 451 and 526 each coordinate Zn(2+). 1D-myo-inositol hexakisphosphate-binding residues include Lys529, Arg532, Lys639, Lys672, Lys682, and Lys700.

In terms of assembly, homodimer. Homodimerization is essential for its catalytic activity. Can form heterodimers with isoform 5 of ADAR/ADAR1. It depends on 1D-myo-inositol hexakisphosphate as a cofactor. In terms of tissue distribution, brain and peripheral tissues.

Its subcellular location is the nucleus. The protein resides in the nucleolus. The catalysed reaction is adenosine in double-stranded RNA + H2O + H(+) = inosine in double-stranded RNA + NH4(+). Functionally, catalyzes the hydrolytic deamination of adenosine to inosine in double-stranded RNA (dsRNA) referred to as A-to-I RNA editing. This may affect gene expression and function in a number of ways that include mRNA translation by changing codons and hence the amino acid sequence of proteins; pre-mRNA splicing by altering splice site recognition sequences; RNA stability by changing sequences involved in nuclease recognition; genetic stability in the case of RNA virus genomes by changing sequences during viral RNA replication; and RNA structure-dependent activities such as microRNA production or targeting or protein-RNA interactions. Can edit both viral and cellular RNAs and can edit RNAs at multiple sites (hyper-editing) or at specific sites (site-specific editing). Its cellular RNA substrates include: bladder cancer-associated protein (BLCAP), neurotransmitter receptors for glutamate (GRIA2 and GRIK2) and serotonin (HTR2C), GABA receptor (GABRA3) and potassium voltage-gated channel (KCNA1). Site-specific RNA editing of transcripts encoding these proteins results in amino acid substitutions which consequently alter their functional activities. Edits GRIA2 at both the Q/R and R/G sites efficiently but converts the adenosine in hotspot1 much less efficiently. Can inhibit cell proliferation and migration and can stimulate exocytosis. The protein is Double-stranded RNA-specific editase 1 (Adarb1) of Rattus norvegicus (Rat).